The following is a 534-amino-acid chain: Acyl-CoA-binding domain-containing protein 5 (534 aa).

Residues 41–130 (HETRFEAAVK…MKKIIETMPM (90 aa)) enclose the ACB domain. 52–61 (IQSLPKNGSF) is a binding site for an acyl-CoA. Residue proline 63 is modified to Phosphothreonine. Residues 72–76 (YSFYK), lysine 98, and tyrosine 117 each bind an acyl-CoA. Phosphothreonine is present on residues leucine 137 and glutamate 172. Residues 181–225 (TPNAKTVNGKAESSDSGAESEEEEAQEEVKGAEQSDNDKKMMKKS) are disordered. A coiled-coil region spans residues 190 to 219 (KAESSDSGAESEEEEAQEEVKGAEQSDNDK). Residues serine 193, serine 194, serine 196, serine 200, serine 215, serine 279, and serine 313 each carry the phosphoserine modification. Residues 207–225 (EEVKGAEQSDNDKKMMKKS) are compositionally biased toward basic and acidic residues. Basic and acidic residues predominate over residues 376 to 385 (EVKHGGEDGR). Residues 376-442 (EVKHGGEDGR…ERWGSDRGSR (67 aa)) form a disordered region. Residue threonine 400 is modified to Phosphothreonine. A Phosphoserine modification is found at serine 428. Positions 431–441 (DGERWGSDRGS) are enriched in basic and acidic residues. Residues 447-476 (EQIALVLMRLQEDMQNVLQRLQKLETLTAL) adopt a coiled-coil conformation. Lysine 469 bears the N6-acetyllysine mark. A helical transmembrane segment spans residues 506–526 (GVLTFAIIWPFIAQWLVYLYY).

The protein belongs to the ATG37 family.

It is found in the peroxisome membrane. Acyl-CoA binding protein which acts as the peroxisome receptor for pexophagy but is dispensable for aggrephagy and nonselective autophagy. Binds medium- and long-chain acyl-CoA esters. The polypeptide is Acyl-CoA-binding domain-containing protein 5 (ACBD5) (Homo sapiens (Human)).